The sequence spans 431 residues: MTSANDKSTDTNVDSTQAEQKMAEKQNKLLSGIIERATKSGIGRKKLNPSAVESAVAKNMAEIHNNPTKLRLVVLGGGSFGTAMANLAARNGCDTTLWVRNKRTVKAMAKSQMNKKYLPGYKLDDRLKYSHELQAAVKDTDIIFIAVPGLAFRETLKSIAPFISGQSIVSLTKGMEKDTFALMSDIIKEELPEVNFGVMSGPNLAIEIMKNMPSATVIASESEPLRHAVQAALHSAFFRVFASDDIRGVELGGALKNIYAIAMGMAAAYEVGENTKAMILTRGLAEMSRFGVHAGANPLTFLGLSGVGDLYATCSSELSRNYRIGNMLGRGMTIDAAVKKLGQTAEGVNTIQQVHEKATKEGIYMPITHALHAVIYEDKAALGVALHLMEAGFRSDVEFVMEHDHSNASLTAQMQTANNQAKNEKTKPDNK.

Positions 1-19 (MTSANDKSTDTNVDSTQAE) are enriched in polar residues. The disordered stretch occupies residues 1–25 (MTSANDKSTDTNVDSTQAEQKMAEK). NADPH is bound by residues serine 79, phenylalanine 80, arginine 100, and lysine 173. Sn-glycerol 3-phosphate-binding residues include lysine 173 and glycine 201. Position 205 (alanine 205) interacts with NADPH. Residues lysine 256, aspartate 309, serine 319, arginine 320, and asparagine 321 each coordinate sn-glycerol 3-phosphate. The active-site Proton acceptor is lysine 256. Residue arginine 320 participates in NADPH binding. Position 346 (glutamate 346) interacts with NADPH.

This sequence belongs to the NAD-dependent glycerol-3-phosphate dehydrogenase family.

It is found in the cytoplasm. The catalysed reaction is sn-glycerol 3-phosphate + NAD(+) = dihydroxyacetone phosphate + NADH + H(+). It carries out the reaction sn-glycerol 3-phosphate + NADP(+) = dihydroxyacetone phosphate + NADPH + H(+). The protein operates within membrane lipid metabolism; glycerophospholipid metabolism. In terms of biological role, catalyzes the reduction of the glycolytic intermediate dihydroxyacetone phosphate (DHAP) to sn-glycerol 3-phosphate (G3P), the key precursor for phospholipid synthesis. In Psychrobacter arcticus (strain DSM 17307 / VKM B-2377 / 273-4), this protein is Glycerol-3-phosphate dehydrogenase [NAD(P)+].